The following is a 181-amino-acid chain: Oligoribonuclease (181 aa).

Residues 8–171 (LIWIDLEMTG…QDIQESIAEL (164 aa)) enclose the Exonuclease domain. Residue Tyr129 is part of the active site.

Belongs to the oligoribonuclease family.

The protein resides in the cytoplasm. 3'-to-5' exoribonuclease specific for small oligoribonucleotides. The protein is Oligoribonuclease of Shewanella sp. (strain ANA-3).